The chain runs to 511 residues: Probable Xaa-Pro aminopeptidase MAA_08947 (511 aa).

Mn(2+)-binding residues include D275, D286, E439, and E480.

The protein belongs to the peptidase M24B family. The cofactor is Mn(2+).

It carries out the reaction Release of any N-terminal amino acid, including proline, that is linked to proline, even from a dipeptide or tripeptide.. In terms of biological role, catalyzes the removal of a penultimate prolyl residue from the N-termini of peptides. The chain is Probable Xaa-Pro aminopeptidase MAA_08947 from Metarhizium robertsii (strain ARSEF 23 / ATCC MYA-3075) (Metarhizium anisopliae (strain ARSEF 23)).